The chain runs to 150 residues: Large ribosomal subunit protein eL19 (150 aa).

The interval 55–89 (IKGQSRYRAKIRHEQKKKGRHRGPGSRKGKKTARM) is disordered.

Belongs to the eukaryotic ribosomal protein eL19 family. As to quaternary structure, part of the 50S ribosomal subunit.

Binds to the 23S rRNA. In Pyrococcus furiosus (strain ATCC 43587 / DSM 3638 / JCM 8422 / Vc1), this protein is Large ribosomal subunit protein eL19.